The chain runs to 130 residues: DNA-directed RNA polymerase subunit omega (130 aa).

Residues 107 to 130 (SLDVSQESHDDEIDDQDSGEEVPI) are disordered. A compositionally biased stretch (acidic residues) spans 115-130 (HDDEIDDQDSGEEVPI).

This sequence belongs to the RNA polymerase subunit omega family. The RNAP catalytic core consists of 2 alpha, 1 beta, 1 beta' and 1 omega subunit. When a sigma factor is associated with the core the holoenzyme is formed, which can initiate transcription.

It catalyses the reaction RNA(n) + a ribonucleoside 5'-triphosphate = RNA(n+1) + diphosphate. Promotes RNA polymerase assembly. Latches the N- and C-terminal regions of the beta' subunit thereby facilitating its interaction with the beta and alpha subunits. In Wolbachia pipientis subsp. Culex pipiens (strain wPip), this protein is DNA-directed RNA polymerase subunit omega.